The sequence spans 133 residues: Small ribosomal subunit protein uS8 (133 aa).

It belongs to the universal ribosomal protein uS8 family. Part of the 30S ribosomal subunit. Contacts proteins S5 and S12.

In terms of biological role, one of the primary rRNA binding proteins, it binds directly to 16S rRNA central domain where it helps coordinate assembly of the platform of the 30S subunit. The chain is Small ribosomal subunit protein uS8 from Prochlorococcus marinus subsp. pastoris (strain CCMP1986 / NIES-2087 / MED4).